The primary structure comprises 221 residues: Phosphoribosylformylglycinamidine synthase subunit PurQ (221 aa).

A Glutamine amidotransferase type-1 domain is found at 3–221 (AAVLVFPGSN…MFASLMQVMA (219 aa)). The active-site Nucleophile is the cysteine 87. Active-site residues include histidine 195 and glutamate 197.

Part of the FGAM synthase complex composed of 1 PurL, 1 PurQ and 2 PurS subunits.

The protein resides in the cytoplasm. The catalysed reaction is N(2)-formyl-N(1)-(5-phospho-beta-D-ribosyl)glycinamide + L-glutamine + ATP + H2O = 2-formamido-N(1)-(5-O-phospho-beta-D-ribosyl)acetamidine + L-glutamate + ADP + phosphate + H(+). The enzyme catalyses L-glutamine + H2O = L-glutamate + NH4(+). It functions in the pathway purine metabolism; IMP biosynthesis via de novo pathway; 5-amino-1-(5-phospho-D-ribosyl)imidazole from N(2)-formyl-N(1)-(5-phospho-D-ribosyl)glycinamide: step 1/2. Its function is as follows. Part of the phosphoribosylformylglycinamidine synthase complex involved in the purines biosynthetic pathway. Catalyzes the ATP-dependent conversion of formylglycinamide ribonucleotide (FGAR) and glutamine to yield formylglycinamidine ribonucleotide (FGAM) and glutamate. The FGAM synthase complex is composed of three subunits. PurQ produces an ammonia molecule by converting glutamine to glutamate. PurL transfers the ammonia molecule to FGAR to form FGAM in an ATP-dependent manner. PurS interacts with PurQ and PurL and is thought to assist in the transfer of the ammonia molecule from PurQ to PurL. This is Phosphoribosylformylglycinamidine synthase subunit PurQ from Zymomonas mobilis subsp. mobilis (strain ATCC 31821 / ZM4 / CP4).